Reading from the N-terminus, the 270-residue chain is Eukaryotic translation initiation factor 2 subunit beta (270 aa).

Residues M1 to E38 form a disordered region.

This sequence belongs to the eIF-2-beta/eIF-5 family. As to quaternary structure, eukaryotic translation initiation factor 2 eIF2 is a heterotrimeric complex composed of an alpha, a beta and a gamma subunit.

It is found in the cytoplasm. It localises to the cytosol. Component of the eIF2 complex that functions in the early steps of protein synthesis by forming a ternary complex with GTP and initiator tRNA. This complex binds to a 40S ribosomal subunit, followed by mRNA binding to form a 43S pre-initiation complex (43S PIC). Junction of the 60S ribosomal subunit to form the 80S initiation complex is preceded by hydrolysis of the GTP bound to eIF2 and release of an eIF2-GDP binary complex. In order for eIF2 to recycle and catalyze another round of initiation, the GDP bound to eIF2 must exchange with GTP by way of a reaction catalyzed by eIF2B. The chain is Eukaryotic translation initiation factor 2 subunit beta from Triticum aestivum (Wheat).